An 84-amino-acid chain; its full sequence is MTDKIRTLQGRVVSDKMEKSMVVAIERFVKHPLYGKFIKRTTKLHVHDENNECGIGDVVEIRECRPLSKTKSWTLVRVVEKAIL.

It belongs to the universal ribosomal protein uS17 family. Part of the 30S ribosomal subunit.

Functionally, one of the primary rRNA binding proteins, it binds specifically to the 5'-end of 16S ribosomal RNA. The chain is Small ribosomal subunit protein uS17 from Pectobacterium atrosepticum (strain SCRI 1043 / ATCC BAA-672) (Erwinia carotovora subsp. atroseptica).